We begin with the raw amino-acid sequence, 30 residues long: QGCPRILKQCKQDSECPGECICMAHGFCTI.

3 disulfide bridges follow: cysteine 3-cysteine 20, cysteine 10-cysteine 22, and cysteine 16-cysteine 28.

The protein belongs to the protease inhibitor I7 (squash-type serine protease inhibitor) family.

Its subcellular location is the secreted. Functionally, inhibits trypsin; probably participates in a plant defense mechanism. This chain is Trypsin inhibitor 4, found in Momordica charantia (Bitter gourd).